The following is a 547-amino-acid chain: Isoflavonoid 7-O-beta-apiosyl-glucoside beta-glycosidase (547 aa).

The first 31 residues, 1 to 31 (MHAMTFKAILLLGLLALVSTSASIAFAKEVR), serve as a signal peptide directing secretion. Q59 is an a beta-D-glucoside binding site. N72 and N132 each carry an N-linked (GlcNAc...) asparagine glycan. H159 contacts a beta-D-glucoside. N-linked (GlcNAc...) asparagine glycosylation occurs at N175. 204–205 (NE) contributes to the a beta-D-glucoside binding site. The active-site Proton donor is the E205. C224 and C232 are joined by a disulfide. N285 is a glycosylation site (N-linked (GlcNAc...) asparagine). A beta-D-glucoside is bound by residues Y348, E419, W468, 475–476 (EW), and F484. The active-site Nucleophile is E419. N490 carries an N-linked (GlcNAc...) asparagine glycan.

Belongs to the glycosyl hydrolase 1 family. Homotetramer.

The enzyme catalyses 7-[beta-D-apiofuranosyl-(1-&gt;6)-beta-D-glucopyranosyloxy]isoflavonoid + H2O = a 7-hydroxyisoflavonoid + beta-D-apiofuranosyl-(1-&gt;6)-D-glucose.. With respect to regulation, not inhibited by iron, calcium, mercury, manganese, zinc or EDTA. In terms of biological role, hydrolyzes dalpatein 7-O-beta-D-apiofuranosyl-(1-&gt;6)-beta-D-glucopyranoside and dalnigrein 7-O-beta-D-apiofuranosyl-(1-&gt;6)-beta-D-glucopyranoside. Also has activity towards pNP-beta-D-fucoside and pNP-beta-D-glucoside, but not pNP-beta-cellobioside. In Dalbergia nigrescens (Thai blackwood), this protein is Isoflavonoid 7-O-beta-apiosyl-glucoside beta-glycosidase.